The primary structure comprises 109 residues: Large ribosomal subunit protein uL24 (109 aa).

The protein belongs to the universal ribosomal protein uL24 family. Part of the 50S ribosomal subunit.

In terms of biological role, one of two assembly initiator proteins, it binds directly to the 5'-end of the 23S rRNA, where it nucleates assembly of the 50S subunit. Its function is as follows. One of the proteins that surrounds the polypeptide exit tunnel on the outside of the subunit. This is Large ribosomal subunit protein uL24 from Rickettsia massiliae (strain Mtu5).